A 355-amino-acid polypeptide reads, in one-letter code: dTDP-glucose 4,6-dehydratase (355 aa).

Residues 12-13 (FI), 33-36 (DKLT), 59-60 (DI), 81-85 (LAAES), and Thr100 each bind NAD(+). Residue Ser85 participates in substrate binding. Thr134 serves as a coordination point for substrate. The Proton donor role is filled by Asp135. Residues Glu136 and Tyr160 each act as proton acceptor in the active site. 160 to 164 (YSASK) provides a ligand contact to NAD(+). Asn189 contributes to the substrate binding site. Asn190 lines the NAD(+) pocket. Residues 199-200 (KL), 215-217 (PVY), Arg224, Asn259, and 293-297 (DRPGH) each bind substrate.

Belongs to the NAD(P)-dependent epimerase/dehydratase family. dTDP-glucose dehydratase subfamily. Homodimer. It depends on NAD(+) as a cofactor.

The enzyme catalyses dTDP-alpha-D-glucose = dTDP-4-dehydro-6-deoxy-alpha-D-glucose + H2O. It functions in the pathway carbohydrate biosynthesis; dTDP-L-rhamnose biosynthesis. The protein operates within bacterial outer membrane biogenesis; LPS O-antigen biosynthesis. Functionally, catalyzes the dehydration of dTDP-D-glucose to form dTDP-6-deoxy-D-xylo-4-hexulose via a three-step process involving oxidation, dehydration and reduction. The polypeptide is dTDP-glucose 4,6-dehydratase (rfbB1) (Neisseria meningitidis serogroup B (strain ATCC BAA-335 / MC58)).